Reading from the N-terminus, the 540-residue chain is MTKYIFVTGGVVSSLGKGISASSLGRLLKNRGLKVTMQKFDPYINIDPGTMNPYQHGEVYVTDDGTEADLDLGHYERIVDVRTSKYSNVTTGKIYQEVLDKERRGDYHGATVQVIPHITDMIKKKIMRAALTTDSDVIISEIGGTVGDIESTPFMEAIRQMRREVGEENVMYIHCTLVPYLHAAHEMKTKPTQHSVAELRSIGIQPNMLVLRAEKPIAQELKNKISTFTDVPVDRIIESIDAPSLFDLPLAFQAQGMDQKVCDFLHLESPKPEADMEAWKKLDERAKNLKNETTITLVGKYVELEDAYISVTDALQHAGYLYDTKIKVNKVQAEDITEDNIAEIMKDSDGLIVPGGFGTRGLEGMITSIKYAREHDIPFLGICLGMQMASVEFARNVLGLKDANSAEANPDTKNNIIDIMADKRDEENIGGTLRLGLYPATLKKGTKTREAYDDQDVIQERHRHRYEFNNEYREAFEKAGMVFSGVSPDNHLVEIIEIPNKKFFIAAQYHPEFLSRPQRPEGLFKAFIGAASGLPAQHFN.

Residues 1–267 (MTKYIFVTGG…DQKVCDFLHL (267 aa)) are amidoligase domain. S13 is a binding site for CTP. S13 is a UTP binding site. 14–19 (SLGKGI) is a binding site for ATP. Residue Y54 coordinates L-glutamine. ATP is bound at residue D71. Residues D71 and E141 each contribute to the Mg(2+) site. CTP contacts are provided by residues 148-150 (DIE), 188-193 (KTKPTQ), and K224. Residues 188 to 193 (KTKPTQ) and K224 each bind UTP. The region spanning 294-537 (TITLVGKYVE…IGAASGLPAQ (244 aa)) is the Glutamine amidotransferase type-1 domain. An L-glutamine-binding site is contributed by G356. The Nucleophile; for glutamine hydrolysis role is filled by C383. Residues 384–387 (LGMQ), E407, and R465 contribute to the L-glutamine site. Catalysis depends on residues H510 and E512.

It belongs to the CTP synthase family. In terms of assembly, homotetramer.

The enzyme catalyses UTP + L-glutamine + ATP + H2O = CTP + L-glutamate + ADP + phosphate + 2 H(+). It carries out the reaction L-glutamine + H2O = L-glutamate + NH4(+). The catalysed reaction is UTP + NH4(+) + ATP = CTP + ADP + phosphate + 2 H(+). It participates in pyrimidine metabolism; CTP biosynthesis via de novo pathway; CTP from UDP: step 2/2. Its activity is regulated as follows. Allosterically activated by GTP, when glutamine is the substrate; GTP has no effect on the reaction when ammonia is the substrate. The allosteric effector GTP functions by stabilizing the protein conformation that binds the tetrahedral intermediate(s) formed during glutamine hydrolysis. Inhibited by the product CTP, via allosteric rather than competitive inhibition. Catalyzes the ATP-dependent amination of UTP to CTP with either L-glutamine or ammonia as the source of nitrogen. Regulates intracellular CTP levels through interactions with the four ribonucleotide triphosphates. This is CTP synthase from Lactobacillus johnsonii (strain CNCM I-12250 / La1 / NCC 533).